The primary structure comprises 610 residues: Zinc metalloproteinase-disintegrin-like brevilysin H6 (610 aa).

Positions 1 to 20 (MIQVLLVTICLAAFPYQGSS) are cleaved as a signal peptide. Positions 21–191 (IILESGNVND…ASQLNLTPEQ (171 aa)) are excised as a propeptide. Q192 bears the Pyrrolidone carboxylic acid mark. Residues 198–394 (RFVELVLVAD…HNPECIVNEP (197 aa)) enclose the Peptidase M12B domain. Residues E201 and D285 each contribute to the Ca(2+) site. 4 disulfides stabilise this stretch: C309–C389, C349–C373, C351–C356, and C373–C378. Residue H334 participates in Zn(2+) binding. E335 is an active-site residue. Zn(2+) contacts are provided by H338 and H344. An N-linked (GlcNAc...) asparagine glycan is attached at N372. The Ca(2+) site is built by C389, N392, V404, N407, L409, E411, E414, and D417. In terms of domain architecture, Disintegrin spans 402 to 488 (PPVCGNELLE…ECPADVFHKN (87 aa)). 22 disulfides stabilise this stretch: C405-C424, C405-C434, C416-C429, C416-C434, C418-C424, C428-C451, C442-C448, C447-C473, C460-C480, C467-C492, C467-C499, C492-C504, C499-C504, C511-C526, C511-C561, C526-C572, C539-C549, C549-C556, C556-C598, C561-C572, C592-C603, and C598-C603. Positions 466-468 (ECD) match the D/ECD-tripeptide motif. Residues D468, P469, E471, D483, and V484 each contribute to the Ca(2+) site.

This sequence belongs to the venom metalloproteinase (M12B) family. P-III subfamily. P-IIIb sub-subfamily. In terms of assembly, monomer. Requires Zn(2+) as cofactor. In the absence of calcium ions, is autocatalytically degraded giving 29 (p29K) and 45 kDa (p45K) fragments. In presence of calcium ions, the p45K is not detected. As to expression, expressed by the venom gland.

Its subcellular location is the secreted. With respect to regulation, inhibited by chelating agents. Calcium ions enhance its activity, they also suppress autoproteolysis, and contribute to the stability of the enzyme against pH, heating, urea and cysteine. In terms of biological role, shows weak hemorrhagic activity. Rapidly degrades the alpha-chain of fibrinogen (FGA). This Gloydius brevicauda (Korean slamosa snake) protein is Zinc metalloproteinase-disintegrin-like brevilysin H6.